The primary structure comprises 377 residues: MAAAAQSRVVRVLSMSRSAITAIATSVCHGPPCRQLHHALMPHGKGGRSSVSGIVATVFGATGFLGRYVVNHLGRMGSQVIIPYRCDKYDIMHLRPMGDLGQLLFLEWDARDKDSIRRVVQHSNVVINLIGRDWETKNFDFEDVFVKIPQAIAQLSKEAGVEKFIHVSHLNANIKSSSRYLRNKAVGEKVVRDAFPEAIIVKPSDIFGREDRFLNSFASMHRFGPIPLGSLGWKTVKQPVYVVDVSKGIVNAVKDPDANGKSFAFVGPSRYLLFHLVKYIFAVAHRLFLPFPLPLFAYRWVARVFEISPFEPWITRDKVERMHITDMKLPHLPGLEDLGIQATPLELKAIEVLRRHRTYRWLSAEIEDVKPAKTVNI.

The transit peptide at 1–35 (MAAAAQSRVVRVLSMSRSAITAIATSVCHGPPCRQ) directs the protein to the mitochondrion. Position 175 is an N6-succinyllysine (K175). Residues K189 and K370 each carry the N6-acetyllysine modification.

The protein belongs to the complex I NDUFA9 subunit family. As to quaternary structure, complex I is composed of 45 different subunits. This a component of the hydrophobic protein fraction. Interacts with BLOC1S1. Interacts with SLC2A4. Interacts with CLOCK. Interacts with RAB5IF. Requires FAD as cofactor. Post-translationally, acetylated on lysine residues. BLOC1S1 is required for acetylation. Acetylated by CLOCK in a circadian manner.

The protein localises to the mitochondrion matrix. Accessory subunit of the mitochondrial membrane respiratory chain NADH dehydrogenase (Complex I), that is believed not to be involved in catalysis. Required for proper complex I assembly. Complex I functions in the transfer of electrons from NADH to the respiratory chain. The immediate electron acceptor for the enzyme is believed to be ubiquinone. This chain is NADH dehydrogenase [ubiquinone] 1 alpha subcomplex subunit 9, mitochondrial (NDUFA9), found in Homo sapiens (Human).